The primary structure comprises 76 residues: Exodeoxyribonuclease 7 small subunit (76 aa).

It belongs to the XseB family. As to quaternary structure, heterooligomer composed of large and small subunits.

The protein resides in the cytoplasm. The catalysed reaction is Exonucleolytic cleavage in either 5'- to 3'- or 3'- to 5'-direction to yield nucleoside 5'-phosphates.. Bidirectionally degrades single-stranded DNA into large acid-insoluble oligonucleotides, which are then degraded further into small acid-soluble oligonucleotides. The sequence is that of Exodeoxyribonuclease 7 small subunit from Bacillus cereus (strain ATCC 14579 / DSM 31 / CCUG 7414 / JCM 2152 / NBRC 15305 / NCIMB 9373 / NCTC 2599 / NRRL B-3711).